The sequence spans 609 residues: MSDEFNANQFLKTVTSSPGVYRMYDAKDAVIYVGKAKDLKKRLSSYFRKNLANVKTQALVSHIANIDVTVTHSETDALILENDYIKQYMPKYNVLLRDDKSYPYILLSNHQHPRLAYHRGPKRDKGQYFGPYPNGGAVRESLHLMQKIFPIRQCDDLYYKSRSRPCLQYQIGRCSAPCVDLVSEEDYQEQVRLATLFLKGKNQQVMSVLVQKMEQASSDMRYEQAALYRDQITALRRVSEQQEVSNASGDMDVIGAYYASGVACFHLLFIREGKIFGSRSYYPKVPVNTEVSEVLRSFMLQFYLNSDSQRLTPKEILISDAFEEQAELADAIQSAQNKKVEIKTQVRGERASFLRLALTNATNAVNTRLSHKNTIEQRFLLLEEAIESTNKIQRMECFDISHTMGESTVASCVVFNREGPSKADYRRYNITGITPGDDYAAMKQAITRRFDKITEKGKIPDILFIDGGIGQLRIAQKVVDEQFVALDNAPTLIGVAKGEGRKPGLETLIYGESEESFSLPADSGALHLIQHIRDESHRFAITGHRNKRQKTRNTSTLETIAGVGPKRRKALLQYLGGLQEVKGASVSELAKVPGISLEMAQTIHDALRG.

Residues 16–94 enclose the GIY-YIG domain; the sequence is SSPGVYRMYD…IKQYMPKYNV (79 aa). The UVR domain occupies 203–238; it reads QQVMSVLVQKMEQASSDMRYEQAALYRDQITALRRV.

Belongs to the UvrC family. In terms of assembly, interacts with UvrB in an incision complex.

It is found in the cytoplasm. Its function is as follows. The UvrABC repair system catalyzes the recognition and processing of DNA lesions. UvrC both incises the 5' and 3' sides of the lesion. The N-terminal half is responsible for the 3' incision and the C-terminal half is responsible for the 5' incision. This is UvrABC system protein C from Shewanella pealeana (strain ATCC 700345 / ANG-SQ1).